The primary structure comprises 480 residues: Aspartyl/glutamyl-tRNA(Asn/Gln) amidotransferase subunit B (480 aa).

The protein belongs to the GatB/GatE family. GatB subfamily. As to quaternary structure, heterotrimer of A, B and C subunits.

It carries out the reaction L-glutamyl-tRNA(Gln) + L-glutamine + ATP + H2O = L-glutaminyl-tRNA(Gln) + L-glutamate + ADP + phosphate + H(+). It catalyses the reaction L-aspartyl-tRNA(Asn) + L-glutamine + ATP + H2O = L-asparaginyl-tRNA(Asn) + L-glutamate + ADP + phosphate + 2 H(+). Its function is as follows. Allows the formation of correctly charged Asn-tRNA(Asn) or Gln-tRNA(Gln) through the transamidation of misacylated Asp-tRNA(Asn) or Glu-tRNA(Gln) in organisms which lack either or both of asparaginyl-tRNA or glutaminyl-tRNA synthetases. The reaction takes place in the presence of glutamine and ATP through an activated phospho-Asp-tRNA(Asn) or phospho-Glu-tRNA(Gln). In Caldicellulosiruptor bescii (strain ATCC BAA-1888 / DSM 6725 / KCTC 15123 / Z-1320) (Anaerocellum thermophilum), this protein is Aspartyl/glutamyl-tRNA(Asn/Gln) amidotransferase subunit B.